A 751-amino-acid chain; its full sequence is 1,3-beta-galactosyl-N-acetylhexosamine phosphorylase (751 aa).

Residue D313 is the Proton donor of the active site.

Belongs to the glycoside hydrolase 112 family. In terms of assembly, homodimer.

The enzyme catalyses beta-D-galactosyl-(1-&gt;3)-N-acetyl-D-glucosamine + phosphate = alpha-D-galactose 1-phosphate + N-acetyl-D-glucosamine. Functionally, reversibly phosphorolyzes lacto-N-biose to Gal1-P and N-acetylglucosamine (GlcNAc) and galacto-N-biose to Gal1-P and N-acetylgalactosamine (GalNAc). Involved in the lacto-N-biose I/galacto-N-biose (LNB/GNB) degradation pathway, which is important for host intestinal colonization by bifidobacteria. This Bifidobacterium longum subsp. longum (strain ATCC 15707 / DSM 20219 / JCM 1217 / NCTC 11818 / E194b) protein is 1,3-beta-galactosyl-N-acetylhexosamine phosphorylase (lnpA).